The following is a 131-amino-acid chain: Transcription antitermination protein NusB (131 aa).

It belongs to the NusB family.

Involved in transcription antitermination. Required for transcription of ribosomal RNA (rRNA) genes. Binds specifically to the boxA antiterminator sequence of the ribosomal RNA (rrn) operons. This chain is Transcription antitermination protein NusB, found in Aliarcobacter butzleri (strain RM4018) (Arcobacter butzleri).